A 112-amino-acid polypeptide reads, in one-letter code: ATP synthase epsilon chain (112 aa).

This sequence belongs to the ATPase epsilon chain family. F-type ATPases have 2 components, CF(1) - the catalytic core - and CF(0) - the membrane proton channel. CF(1) has five subunits: alpha(3), beta(3), gamma(1), delta(1), epsilon(1). CF(0) has three main subunits: a, b and c.

The protein localises to the cell inner membrane. Functionally, produces ATP from ADP in the presence of a proton gradient across the membrane. The sequence is that of ATP synthase epsilon chain from Rickettsia rickettsii (strain Sheila Smith).